The sequence spans 492 residues: Probable cytochrome P450 313a3 (492 aa).

Position 438 (Cys-438) interacts with heme.

This sequence belongs to the cytochrome P450 family. Heme is required as a cofactor.

The protein resides in the endoplasmic reticulum membrane. The protein localises to the microsome membrane. May be involved in the metabolism of insect hormones and in the breakdown of synthetic insecticides. This is Probable cytochrome P450 313a3 (Cyp313a3) from Drosophila melanogaster (Fruit fly).